The chain runs to 938 residues: Isoleucine--tRNA ligase (938 aa).

A 'HIGH' region motif is present at residues Pro-58–His-68. Glu-566 is an L-isoleucyl-5'-AMP binding site. The 'KMSKS' region motif lies at Lys-607–Ser-611. Position 610 (Lys-610) interacts with ATP. Zn(2+) is bound by residues Cys-906, Cys-909, Cys-926, and Cys-929.

The protein belongs to the class-I aminoacyl-tRNA synthetase family. IleS type 1 subfamily. As to quaternary structure, monomer. It depends on Zn(2+) as a cofactor.

It is found in the cytoplasm. The catalysed reaction is tRNA(Ile) + L-isoleucine + ATP = L-isoleucyl-tRNA(Ile) + AMP + diphosphate. In terms of biological role, catalyzes the attachment of isoleucine to tRNA(Ile). As IleRS can inadvertently accommodate and process structurally similar amino acids such as valine, to avoid such errors it has two additional distinct tRNA(Ile)-dependent editing activities. One activity is designated as 'pretransfer' editing and involves the hydrolysis of activated Val-AMP. The other activity is designated 'posttransfer' editing and involves deacylation of mischarged Val-tRNA(Ile). The chain is Isoleucine--tRNA ligase from Nitratidesulfovibrio vulgaris (strain DP4) (Desulfovibrio vulgaris).